Consider the following 178-residue polypeptide: MAGYQLWSPWTPLDESFQWLRHTTPTPSSKHPFRASPCFPHTPSDLEVQLCLQEVTLVLDRPLVEPGESPKLPCHKSELRAVSNKKGVVRKPQPVRLSGVDSVFGRVITAQPPKWTGTFRVSDKSAFCKIISREHQWPTGLKEPQVQMTVTMCKQMLRSILLLYATYKKCTFALQHSK.

The polypeptide is FANCD2 opposite strand protein (Fancd2os) (Mus musculus (Mouse)).